Here is a 550-residue protein sequence, read N- to C-terminus: Dihydroxy-acid dehydratase (550 aa).

Position 78 (Asp78) interacts with Mg(2+). Position 119 (Cys119) interacts with [2Fe-2S] cluster. Mg(2+) contacts are provided by Asp120 and Lys121. Lys121 carries the N6-carboxylysine modification. Cys192 serves as a coordination point for [2Fe-2S] cluster. Residue Glu440 participates in Mg(2+) binding. Ser466 serves as the catalytic Proton acceptor.

This sequence belongs to the IlvD/Edd family. As to quaternary structure, homodimer. [2Fe-2S] cluster is required as a cofactor. The cofactor is Mg(2+).

The enzyme catalyses (2R)-2,3-dihydroxy-3-methylbutanoate = 3-methyl-2-oxobutanoate + H2O. It catalyses the reaction (2R,3R)-2,3-dihydroxy-3-methylpentanoate = (S)-3-methyl-2-oxopentanoate + H2O. It functions in the pathway amino-acid biosynthesis; L-isoleucine biosynthesis; L-isoleucine from 2-oxobutanoate: step 3/4. Its pathway is amino-acid biosynthesis; L-valine biosynthesis; L-valine from pyruvate: step 3/4. Functions in the biosynthesis of branched-chain amino acids. Catalyzes the dehydration of (2R,3R)-2,3-dihydroxy-3-methylpentanoate (2,3-dihydroxy-3-methylvalerate) into 2-oxo-3-methylpentanoate (2-oxo-3-methylvalerate) and of (2R)-2,3-dihydroxy-3-methylbutanoate (2,3-dihydroxyisovalerate) into 2-oxo-3-methylbutanoate (2-oxoisovalerate), the penultimate precursor to L-isoleucine and L-valine, respectively. The protein is Dihydroxy-acid dehydratase of Thermodesulfovibrio yellowstonii (strain ATCC 51303 / DSM 11347 / YP87).